Reading from the N-terminus, the 431-residue chain is Gamma-glutamyl phosphate reductase (431 aa).

Belongs to the gamma-glutamyl phosphate reductase family.

Its subcellular location is the cytoplasm. It catalyses the reaction L-glutamate 5-semialdehyde + phosphate + NADP(+) = L-glutamyl 5-phosphate + NADPH + H(+). The protein operates within amino-acid biosynthesis; L-proline biosynthesis; L-glutamate 5-semialdehyde from L-glutamate: step 2/2. Functionally, catalyzes the NADPH-dependent reduction of L-glutamate 5-phosphate into L-glutamate 5-semialdehyde and phosphate. The product spontaneously undergoes cyclization to form 1-pyrroline-5-carboxylate. The polypeptide is Gamma-glutamyl phosphate reductase (Acaryochloris marina (strain MBIC 11017)).